A 475-amino-acid polypeptide reads, in one-letter code: Secreted triacylglycerol lipase LIP5 (475 aa).

An N-terminal signal peptide occupies residues 1–19 (MYPCTLLMVLLCLAIMTHG). A disulfide bridge connects residues Cys129 and Cys300. The active-site Nucleophile is the Ser213. 2 N-linked (GlcNAc...) asparagine glycosylation sites follow: Asn246 and Asn312. Asp360 is a catalytic residue. Asn369 carries an N-linked (GlcNAc...) asparagine glycan. Residue His394 is part of the active site. Residue Asn471 is glycosylated (N-linked (GlcNAc...) asparagine).

This sequence belongs to the AB hydrolase superfamily. Lipase family. Class Lip subfamily.

The catalysed reaction is a triacylglycerol + H2O = a diacylglycerol + a fatty acid + H(+). It carries out the reaction a monoacylglycerol + H2O = glycerol + a fatty acid + H(+). It catalyses the reaction a diacylglycerol + H2O = a monoacylglycerol + a fatty acid + H(+). Functionally, secreted lipase involved in Dandruff and seborrheic dermatitis (D/SD) probably via lipase-mediated breakdown of sebaceous lipids and release of irritating free fatty acids. Has triacylglycerol lipase activity and is able to hydrolyze triolein. Mostly converts monoolein to di- and triolein, while free fatty acids are only produced in low amounts. This Malassezia globosa (strain ATCC MYA-4612 / CBS 7966) (Dandruff-associated fungus) protein is Secreted triacylglycerol lipase LIP5.